The primary structure comprises 470 residues: Glucose-1-phosphate adenylyltransferase (470 aa).

Alpha-D-glucose 1-phosphate is bound by residues G165, 182 to 183 (EK), and S200.

Belongs to the bacterial/plant glucose-1-phosphate adenylyltransferase family. As to quaternary structure, homotetramer.

The catalysed reaction is alpha-D-glucose 1-phosphate + ATP + H(+) = ADP-alpha-D-glucose + diphosphate. Its pathway is glycan biosynthesis; glycogen biosynthesis. In terms of biological role, involved in the biosynthesis of ADP-glucose, a building block required for the elongation reactions to produce glycogen. Catalyzes the reaction between ATP and alpha-D-glucose 1-phosphate (G1P) to produce pyrophosphate and ADP-Glc. This chain is Glucose-1-phosphate adenylyltransferase, found in Paenarthrobacter aurescens (strain TC1).